Reading from the N-terminus, the 362-residue chain is Oxysterol-binding protein 5 (362 aa).

It belongs to the OSBP family.

The protein is Oxysterol-binding protein 5 (osbE) of Dictyostelium discoideum (Social amoeba).